A 311-amino-acid polypeptide reads, in one-letter code: MLLTQSYFCIMSMLGTLARLGLTALNTYPGAPFSGLLWVQFVGCVIMGFCQTESVFFPRPKHNATFLLAITTGFCGSLTTFSSWMLQMFTGMANLDPFERRGRGYSFLSVVSDFMVTMCIAMSSLIWGKQIGKTTGQWRIGKVAFAWPIPAHTHIVVRVLLLLLSICFFVGAAFYTAYTTNVTHRGIGFSLIFSPFAALTRLYLARFLNSPQYFIPYGTLCANVFATLLLSIMYMIPQITHCTPVSRSVMYGIQNGFCAVLSTLSTFSNELHTMPIKRAYIYCIISVAISFSICVIVDGATAWGHGYTEKY.

At 1–6 (MLLTQS) the chain is on the cytoplasmic side. A helical transmembrane segment spans residues 7–25 (YFCIMSMLGTLARLGLTAL). Topologically, residues 26–29 (NTYP) are extracellular. A helical transmembrane segment spans residues 30–50 (GAPFSGLLWVQFVGCVIMGFC). The Cytoplasmic portion of the chain corresponds to 51–65 (QTESVFFPRPKHNAT). The chain crosses the membrane as a helical span at residues 66–86 (FLLAITTGFCGSLTTFSSWML). Over 87 to 106 (QMFTGMANLDPFERRGRGYS) the chain is Extracellular. A helical membrane pass occupies residues 107–127 (FLSVVSDFMVTMCIAMSSLIW). Residues 128-154 (GKQIGKTTGQWRIGKVAFAWPIPAHTH) are Cytoplasmic-facing. A helical transmembrane segment spans residues 155-175 (IVVRVLLLLLSICFFVGAAFY). Residues 176 to 186 (TAYTTNVTHRG) are Extracellular-facing. Residue Asn-181 is glycosylated (N-linked (GlcNAc...) asparagine). A helical membrane pass occupies residues 187–207 (IGFSLIFSPFAALTRLYLARF). The Cytoplasmic portion of the chain corresponds to 208 to 212 (LNSPQ). The helical transmembrane segment at 213 to 233 (YFIPYGTLCANVFATLLLSIM) threads the bilayer. At 234 to 250 (YMIPQITHCTPVSRSVM) the chain is on the extracellular side. The helical transmembrane segment at 251-268 (YGIQNGFCAVLSTLSTFS) threads the bilayer. The Cytoplasmic portion of the chain corresponds to 269 to 278 (NELHTMPIKR). Residues 279–299 (AYIYCIISVAISFSICVIVDG) traverse the membrane as a helical segment. The Extracellular portion of the chain corresponds to 300–311 (ATAWGHGYTEKY).

Belongs to the fluoride channel Fluc/FEX (TC 1.A.43) family.

The protein resides in the cell membrane. The enzyme catalyses fluoride(in) = fluoride(out). Functionally, fluoride channel required for the rapid expulsion of cytoplasmic fluoride. The protein is Fluoride export protein 1 (fex1) of Schizosaccharomyces pombe (strain 972 / ATCC 24843) (Fission yeast).